We begin with the raw amino-acid sequence, 122 residues long: Large ribosomal subunit protein uL22 (122 aa).

The segment at 103–122 (VEGKEMKSSKSHKKNQAEGK) is disordered.

The protein belongs to the universal ribosomal protein uL22 family. In terms of assembly, part of the 50S ribosomal subunit.

Functionally, this protein binds specifically to 23S rRNA; its binding is stimulated by other ribosomal proteins, e.g. L4, L17, and L20. It is important during the early stages of 50S assembly. It makes multiple contacts with different domains of the 23S rRNA in the assembled 50S subunit and ribosome. In terms of biological role, the globular domain of the protein is located near the polypeptide exit tunnel on the outside of the subunit, while an extended beta-hairpin is found that lines the wall of the exit tunnel in the center of the 70S ribosome. The sequence is that of Large ribosomal subunit protein uL22 from Helicobacter pylori (strain P12).